The sequence spans 138 residues: ATP synthase epsilon chain (138 aa).

It belongs to the ATPase epsilon chain family. F-type ATPases have 2 components, CF(1) - the catalytic core - and CF(0) - the membrane proton channel. CF(1) has five subunits: alpha(3), beta(3), gamma(1), delta(1), epsilon(1). CF(0) has three main subunits: a, b and c.

It localises to the cell membrane. Its function is as follows. Produces ATP from ADP in the presence of a proton gradient across the membrane. This chain is ATP synthase epsilon chain, found in Streptococcus equinus (Streptococcus bovis).